Consider the following 166-residue polypeptide: Lipoprotein signal peptidase (166 aa).

A run of 4 helical transmembrane segments spans residues 9–29 (ASGA…FDQL), 45–65 (ALTS…FGFL), 71–91 (WQRW…CFLL), and 100–120 (FSLS…DRLV). Catalysis depends on residues Asp126 and Asp144. Residues 135–155 (WHFPAFNLADSAITIGAVLLV) form a helical membrane-spanning segment.

It belongs to the peptidase A8 family.

The protein resides in the cell inner membrane. It carries out the reaction Release of signal peptides from bacterial membrane prolipoproteins. Hydrolyzes -Xaa-Yaa-Zaa-|-(S,diacylglyceryl)Cys-, in which Xaa is hydrophobic (preferably Leu), and Yaa (Ala or Ser) and Zaa (Gly or Ala) have small, neutral side chains.. It functions in the pathway protein modification; lipoprotein biosynthesis (signal peptide cleavage). Functionally, this protein specifically catalyzes the removal of signal peptides from prolipoproteins. The sequence is that of Lipoprotein signal peptidase from Burkholderia ambifaria (strain ATCC BAA-244 / DSM 16087 / CCUG 44356 / LMG 19182 / AMMD) (Burkholderia cepacia (strain AMMD)).